Consider the following 504-residue polypeptide: Glucose-6-phosphate isomerase (504 aa).

Glu-333 serves as the catalytic Proton donor. Catalysis depends on residues His-364 and Lys-473.

Belongs to the GPI family.

Its subcellular location is the cytoplasm. The enzyme catalyses alpha-D-glucose 6-phosphate = beta-D-fructose 6-phosphate. It participates in carbohydrate biosynthesis; gluconeogenesis. It functions in the pathway carbohydrate degradation; glycolysis; D-glyceraldehyde 3-phosphate and glycerone phosphate from D-glucose: step 2/4. Catalyzes the reversible isomerization of glucose-6-phosphate to fructose-6-phosphate. This chain is Glucose-6-phosphate isomerase, found in Xanthomonas oryzae pv. oryzae (strain MAFF 311018).